The sequence spans 170 residues: Transcription factor E (170 aa).

The HTH TFE/IIEalpha-type domain occupies 1–93; the sequence is MKEAYLYIVE…TWYVDDEIIR (93 aa).

Belongs to the TFE family. In terms of assembly, monomer. Interaction with RNA polymerase subunits RpoF and RpoE is necessary for Tfe stimulatory transcription activity. Able to interact with Tbp and RNA polymerase in the absence of DNA promoter. Interacts both with the preinitiation and elongation complexes.

In terms of biological role, transcription factor that plays a role in the activation of archaeal genes transcribed by RNA polymerase. Facilitates transcription initiation by enhancing TATA-box recognition by TATA-box-binding protein (Tbp), and transcription factor B (Tfb) and RNA polymerase recruitment. Not absolutely required for transcription in vitro, but particularly important in cases where Tbp or Tfb function is not optimal. It dynamically alters the nucleic acid-binding properties of RNA polymerases by stabilizing the initiation complex and destabilizing elongation complexes. Seems to translocate with the RNA polymerase following initiation and acts by binding to the non template strand of the transcription bubble in elongation complexes. This Pyrobaculum islandicum (strain DSM 4184 / JCM 9189 / GEO3) protein is Transcription factor E.